A 635-amino-acid chain; its full sequence is Iron transport multicopper oxidase FET3 (635 aa).

The signal sequence occupies residues 1–17; sequence MMVPLLLSTYFITAVYG. At 18–559 the chain is on the extracellular side; sequence ATHTFHWTTG…KSIPTGFTKK (542 aa). Plastocyanin-like domains lie at 42-140 and 190-292; these read ITCN…FVIE and NLIL…LQLN. N-linked (GlcNAc...) asparagine glycans are attached at residues N70 and N73. Cu cation contacts are provided by H77 and H79. An N-linked (GlcNAc...) asparagine glycan is attached at N109. Residues H122 and H124 each coordinate Cu cation. N-linked (GlcNAc...) asparagine glycosylation is found at N194, N198, N244, N265, N292, and N359. The Plastocyanin-like 3 domain occupies 382–501; the sequence is NPFIYGTNTN…QGLAVVMVED (120 aa). Cu cation-binding residues include H413, H416, and H418. N443 is a glycosylation site (N-linked (GlcNAc...) asparagine). H483, C484, H485, and H489 together coordinate Cu cation. N-linked (GlcNAc...) asparagine glycosylation is present at N535. The helical transmembrane segment at 560–580 threads the bilayer; the sequence is GIIAMTFSCLAGVLGITMIAI. Topologically, residues 581–628 are cytoplasmic; the sequence is YGFSEIPEPEIKVMRNLHLNPEDVLEKTSSSSVISASNSSSLEDSRNQ.

It belongs to the multicopper oxidase family. Cu cation serves as cofactor.

Its subcellular location is the cell membrane. In terms of biological role, iron transport multicopper ferroxidase required for Fe(2+) high affinity uptake. Required to oxidize Fe(2+) and release it from the transporter. Essential component of copper-dependent iron transport. The protein is Iron transport multicopper oxidase FET3 (FET3) of Candida glabrata (strain ATCC 2001 / BCRC 20586 / JCM 3761 / NBRC 0622 / NRRL Y-65 / CBS 138) (Yeast).